An 867-amino-acid polypeptide reads, in one-letter code: Leucine--tRNA ligase (867 aa).

A 'HIGH' region motif is present at residues 57 to 67; sequence PYPSGTLHMGH. Positions 308–327 are disordered; the sequence is SQDERTSDDQPKRGVPTGAV. The span at 309–319 shows a compositional bias: basic and acidic residues; that stretch reads QDERTSDDQPK. Positions 631–635 match the 'KMSKS' region motif; it reads KMSKS. Lysine 634 lines the ATP pocket.

Belongs to the class-I aminoacyl-tRNA synthetase family.

Its subcellular location is the cytoplasm. It catalyses the reaction tRNA(Leu) + L-leucine + ATP = L-leucyl-tRNA(Leu) + AMP + diphosphate. This chain is Leucine--tRNA ligase, found in Synechococcus sp. (strain CC9311).